Consider the following 459-residue polypeptide: tRNA modification GTPase MnmE (459 aa).

(6S)-5-formyl-5,6,7,8-tetrahydrofolate is bound by residues Arg21, Glu84, and Arg123. The TrmE-type G domain occupies 219 to 378; it reads GVTVALAGAV…LLVLLYNFVL (160 aa). Residues 229–234, 248–254, and 273–276 each bind GTP; these read NAGKSS, TEHPGTT, and DTAG. Residues Ser233 and Thr254 each coordinate Mg(2+). (6S)-5-formyl-5,6,7,8-tetrahydrofolate is bound at residue Lys459.

Belongs to the TRAFAC class TrmE-Era-EngA-EngB-Septin-like GTPase superfamily. TrmE GTPase family. As to quaternary structure, homodimer. Heterotetramer of two MnmE and two MnmG subunits. The cofactor is K(+).

Its subcellular location is the cytoplasm. In terms of biological role, exhibits a very high intrinsic GTPase hydrolysis rate. Involved in the addition of a carboxymethylaminomethyl (cmnm) group at the wobble position (U34) of certain tRNAs, forming tRNA-cmnm(5)s(2)U34. The polypeptide is tRNA modification GTPase MnmE (Lawsonia intracellularis (strain PHE/MN1-00)).